Consider the following 460-residue polypeptide: UDP-N-acetylmuramate--L-alanine ligase (460 aa).

Residue 119 to 125 coordinates ATP; sequence GSHGKTT.

The protein belongs to the MurCDEF family.

It is found in the cytoplasm. The catalysed reaction is UDP-N-acetyl-alpha-D-muramate + L-alanine + ATP = UDP-N-acetyl-alpha-D-muramoyl-L-alanine + ADP + phosphate + H(+). It functions in the pathway cell wall biogenesis; peptidoglycan biosynthesis. Cell wall formation. The sequence is that of UDP-N-acetylmuramate--L-alanine ligase from Alkaliphilus metalliredigens (strain QYMF).